Consider the following 225-residue polypeptide: Methylthioribulose-1-phosphate dehydratase (225 aa).

H106 and H108 together coordinate Zn(2+).

It belongs to the aldolase class II family. MtnB subfamily. The cofactor is Zn(2+).

It catalyses the reaction 5-(methylsulfanyl)-D-ribulose 1-phosphate = 5-methylsulfanyl-2,3-dioxopentyl phosphate + H2O. It participates in amino-acid biosynthesis; L-methionine biosynthesis via salvage pathway; L-methionine from S-methyl-5-thio-alpha-D-ribose 1-phosphate: step 2/6. Functionally, catalyzes the dehydration of methylthioribulose-1-phosphate (MTRu-1-P) into 2,3-diketo-5-methylthiopentyl-1-phosphate (DK-MTP-1-P). This is Methylthioribulose-1-phosphate dehydratase from Xanthomonas oryzae pv. oryzae (strain MAFF 311018).